Here is a 266-residue protein sequence, read N- to C-terminus: Putative zinc finger protein 034R (266 aa).

Positions 84 to 176 (SPTKSVDKAA…GPKRDSTQQP (93 aa)) are disordered. Basic and acidic residues predominate over residues 88 to 100 (SVDKAAQKEKKMP). 2 stretches are compositionally biased toward polar residues: residues 105 to 119 (KPTTVTPTRNEQGIL) and 160 to 176 (GVSQQQQGPKRDSTQQP). The C3H1-type zinc finger occupies 180-192 (CKSVLKQAKCYFG).

It belongs to the IIV-6 077L family.

The chain is Putative zinc finger protein 034R from Aedes vexans (Inland floodwater mosquito).